A 104-amino-acid polypeptide reads, in one-letter code: Large ribosomal subunit protein uL24 (104 aa).

Belongs to the universal ribosomal protein uL24 family. As to quaternary structure, part of the 50S ribosomal subunit.

In terms of biological role, one of two assembly initiator proteins, it binds directly to the 5'-end of the 23S rRNA, where it nucleates assembly of the 50S subunit. Functionally, one of the proteins that surrounds the polypeptide exit tunnel on the outside of the subunit. The sequence is that of Large ribosomal subunit protein uL24 from Flavobacterium johnsoniae (strain ATCC 17061 / DSM 2064 / JCM 8514 / BCRC 14874 / CCUG 350202 / NBRC 14942 / NCIMB 11054 / UW101) (Cytophaga johnsonae).